Here is a 181-residue protein sequence, read N- to C-terminus: Ribulose bisphosphate carboxylase small subunit, chloroplastic 6 (181 aa).

A chloroplast-targeting transit peptide spans 1-57; the sequence is MASSIVSSAAVATRSNVAQASMVAPFTGLKSAASFPVTKKNNNVDITSLASNGGRVR.

Belongs to the RuBisCO small chain family. As to quaternary structure, heterohexadecamer of 8 large and 8 small subunits.

The protein resides in the plastid. It is found in the chloroplast. Its function is as follows. RuBisCO catalyzes two reactions: the carboxylation of D-ribulose 1,5-bisphosphate, the primary event in carbon dioxide fixation, as well as the oxidative fragmentation of the pentose substrate. Both reactions occur simultaneously and in competition at the same active site. Although the small subunit is not catalytic it is essential for maximal activity. In Solanum tuberosum (Potato), this protein is Ribulose bisphosphate carboxylase small subunit, chloroplastic 6.